The sequence spans 1248 residues: Structural maintenance of chromosomes protein 1B (1248 aa).

32–39 is a binding site for ATP; sequence GPNGSGKS. Residues 163–502 are a coiled coil; that stretch reads EFIGEYEAKK…EGKRQQKRAE (340 aa). In terms of domain architecture, SMC hinge spans 514–629; the sequence is SVFGRLLDLC…ETVEEARHIA (116 aa). Residues lysine 648, lysine 713, and lysine 1032 each carry the N6-acetyllysine modification. Residues 666-912 adopt a coiled-coil conformation; it reads WDEKELHNLR…REVGKLQKEV (247 aa). Residues 1219–1228 are compositionally biased toward basic and acidic residues; it reads PDTEDQEGSR. Residues 1219–1248 are disordered; the sequence is PDTEDQEGSRSHRKPRVPRVSMSPKSPQSR.

Belongs to the SMC family. SMC1 subfamily. In terms of assembly, forms a heterodimer with SMC3. Component of a meiosis-specific cohesin complex, probably composed of the SMC1B and SMC3 heterodimer attached via their SMC hinge domain, RAD21 (or its meiosis-specific related protein REC8), which link them, and STAG3, which interacts with RAD21 or REC8. The cohesin complex interacts with the cohesin loading complex subunits NIPBL/Scc2 (via HEAT repeats) and MAU2/Scc4. NIPBL directly contacts all members of the complex, RAD21, SMC1A/B, SMC3 and STAG1. As to expression, spermatocytes (at protein level). Testis and ovary specific. Not expressed in somatic cells.

Its subcellular location is the nucleus. It is found in the chromosome. The protein resides in the centromere. Its function is as follows. Meiosis-specific component of cohesin complex. Required for the maintenance of meiotic cohesion, but not, or only to a minor extent, for its establishment. Contributes to axial element (AE) formation and the organization of chromatin loops along the AE. Plays a key role in synapsis, recombination and chromosome movements. The cohesin complex is required for the cohesion of sister chromatids after DNA replication. The cohesin complex apparently forms a large proteinaceous ring within which sister chromatids can be trapped. At anaphase, the complex is cleaved and dissociates from chromatin, allowing sister chromatids to segregate. The meiosis-specific cohesin complex probably replaces mitosis specific cohesin complex when it dissociates from chromatin during prophase I. This Mus musculus (Mouse) protein is Structural maintenance of chromosomes protein 1B (Smc1b).